The sequence spans 233 residues: Phosphoenolpyruvate guanylyltransferase 1 (233 aa).

Phosphoenolpyruvate contacts are provided by Thr154, Gly171, and Ser174.

The protein belongs to the CofC family.

It catalyses the reaction phosphoenolpyruvate + GTP + H(+) = enolpyruvoyl-2-diphospho-5'-guanosine + diphosphate. The protein operates within cofactor biosynthesis; coenzyme F420 biosynthesis. In terms of biological role, guanylyltransferase that catalyzes the activation of phosphoenolpyruvate (PEP) as enolpyruvoyl-2-diphospho-5'-guanosine, via the condensation of PEP with GTP. It is involved in the biosynthesis of coenzyme F420, a hydride carrier cofactor. This chain is Phosphoenolpyruvate guanylyltransferase 1, found in Rhodococcus jostii (strain RHA1).